We begin with the raw amino-acid sequence, 313 residues long: Protoheme IX farnesyltransferase (313 aa).

The next 8 membrane-spanning stretches (helical) occupy residues 23-43 (ILAYIALTKPRVIELLLVTTI), 56-76 (PLLILNTLLGGVMAAASANTL), 107-127 (LIFGVVLGVGAFAWLWWTANL), 128-148 (LSGLLAVATIAFYVFVYTLVL), 155-175 (NVVWGGAAGCMPVMIGWSAVT), 182-202 (ALVMFAVIFFWTPPHTWALAM), 243-263 (LALAAGVIYAVVAFLAGVWFL), and 291-311 (YLAVVFCALAVDSVVGWPTLF).

It belongs to the UbiA prenyltransferase family. Protoheme IX farnesyltransferase subfamily.

Its subcellular location is the cell membrane. The enzyme catalyses heme b + (2E,6E)-farnesyl diphosphate + H2O = Fe(II)-heme o + diphosphate. It participates in porphyrin-containing compound metabolism; heme O biosynthesis; heme O from protoheme: step 1/1. Its function is as follows. Converts heme B (protoheme IX) to heme O by substitution of the vinyl group on carbon 2 of heme B porphyrin ring with a hydroxyethyl farnesyl side group. The polypeptide is Protoheme IX farnesyltransferase (Mycobacteroides abscessus (strain ATCC 19977 / DSM 44196 / CCUG 20993 / CIP 104536 / JCM 13569 / NCTC 13031 / TMC 1543 / L948) (Mycobacterium abscessus)).